Consider the following 269-residue polypeptide: Putative hydro-lyase Aave_3512 (269 aa).

Belongs to the D-glutamate cyclase family.

In Paracidovorax citrulli (strain AAC00-1) (Acidovorax citrulli), this protein is Putative hydro-lyase Aave_3512.